A 129-amino-acid chain; its full sequence is MAKRTARVKRRERKNVDKGVAHIRSTFNNTIVTITDVHGNALAWATAGAMGFKGSRKSTPFAAQMAAEKAAKDAMEHGVREVEVLVKGPGSGREAAIRQLQAAGLEVTAIKDVTPIPHNGCRPPKRRRV.

It belongs to the universal ribosomal protein uS11 family. As to quaternary structure, part of the 30S ribosomal subunit. Interacts with proteins S7 and S18. Binds to IF-3.

Located on the platform of the 30S subunit, it bridges several disparate RNA helices of the 16S rRNA. Forms part of the Shine-Dalgarno cleft in the 70S ribosome. This chain is Small ribosomal subunit protein uS11, found in Symbiobacterium thermophilum (strain DSM 24528 / JCM 14929 / IAM 14863 / T).